The sequence spans 202 residues: Holliday junction branch migration complex subunit RuvA (202 aa).

Residues 1-65 (MIAYVEGRLA…EDALELYGFA (65 aa)) form a domain I region. The tract at residues 66-144 (TWDERQTFIV…VEDLPAAAPL (79 aa)) is domain II. Positions 145–155 (VTGGAPGGVFR) are flexible linker. The tract at residues 155–202 (RDALAGLANLGYGEEEASHVLKDVLHGEPDLDVGGALRAALRALARGR) is domain III.

Belongs to the RuvA family. In terms of assembly, homotetramer. Forms an RuvA(8)-RuvB(12)-Holliday junction (HJ) complex. HJ DNA is sandwiched between 2 RuvA tetramers; dsDNA enters through RuvA and exits via RuvB. An RuvB hexamer assembles on each DNA strand where it exits the tetramer. Each RuvB hexamer is contacted by two RuvA subunits (via domain III) on 2 adjacent RuvB subunits; this complex drives branch migration. In the full resolvosome a probable DNA-RuvA(4)-RuvB(12)-RuvC(2) complex forms which resolves the HJ.

The protein resides in the cytoplasm. In terms of biological role, the RuvA-RuvB-RuvC complex processes Holliday junction (HJ) DNA during genetic recombination and DNA repair, while the RuvA-RuvB complex plays an important role in the rescue of blocked DNA replication forks via replication fork reversal (RFR). RuvA specifically binds to HJ cruciform DNA, conferring on it an open structure. The RuvB hexamer acts as an ATP-dependent pump, pulling dsDNA into and through the RuvAB complex. HJ branch migration allows RuvC to scan DNA until it finds its consensus sequence, where it cleaves and resolves the cruciform DNA. This Nitratidesulfovibrio vulgaris (strain ATCC 29579 / DSM 644 / CCUG 34227 / NCIMB 8303 / VKM B-1760 / Hildenborough) (Desulfovibrio vulgaris) protein is Holliday junction branch migration complex subunit RuvA.